Consider the following 185-residue polypeptide: Casparian strip membrane protein 5 (185 aa).

Residues 1–25 (MKAEAVESGEASTIIAAPKRGINRG) are Cytoplasmic-facing. A helical transmembrane segment spans residues 26–46 (ISIADLILRGVAAIGTFASAL). Residues 47–75 (TMGTTSETLTIFTQPIMIRAKYNDLPSLT) lie on the Extracellular side of the membrane. The chain crosses the membrane as a helical span at residues 76 to 96 (FFVIANSIVCGYLVLSIPLSI). Topologically, residues 97–108 (SHFIRREARITR) are cytoplasmic. A helical membrane pass occupies residues 109–129 (IILVIFDTAMVELLTAGASAA). At 130–160 (TVVVYLAHKRNANWLAICQQFNNFCERISGS) the chain is on the extracellular side. The helical transmembrane segment at 161–181 (LIGSFASIIMIMLIIITSAVA) threads the bilayer. Residues 182–185 (LSRH) lie on the Cytoplasmic side of the membrane.

Belongs to the Casparian strip membrane proteins (CASP) family. As to quaternary structure, homodimer and heterodimers.

It is found in the cell membrane. Functionally, regulates membrane-cell wall junctions and localized cell wall deposition. Required for establishment of the Casparian strip membrane domain (CSD) and the subsequent formation of Casparian strips, a cell wall modification of the root endodermis that determines an apoplastic barrier between the intraorganismal apoplasm and the extraorganismal apoplasm and prevents lateral diffusion. This Populus trichocarpa (Western balsam poplar) protein is Casparian strip membrane protein 5.